A 1091-amino-acid chain; its full sequence is Rho GTPase-activating protein 7 (1091 aa).

Residues 11–78 enclose the SAM domain; it reads LTQIEAKEAC…LNKCAVMKLE (68 aa). A phosphoserine mark is found at Ser86, Ser89, and Ser129. 4 disordered regions span residues 120–181, 296–329, 402–439, and 491–552; these read SPKQ…TTPR, RSVS…TRSL, RTGS…SSRM, and SDEG…SGVG. Polar residues predominate over residues 130–143; it reads PDNSRLQSATSRES. 2 stretches are compositionally biased toward low complexity: residues 155-166 and 298-324; these read SSIRSLSSTSSS and VSNS…SPVT. Residues 274 to 447 are focal adhesion-targeting (FAT); the sequence is QLNCVEISAL…RMSIYDNVPG (174 aa). Ser321 carries the post-translational modification Phosphoserine. The span at 414-425 shows a compositional bias: basic and acidic residues; the sequence is LRRENSSDSPKE. Positions 499 to 511 are enriched in polar residues; sequence ALDSVSPCPSSPK. Positions 513-525 are enriched in basic and acidic residues; the sequence is IHLDVDHDRRTPS. The span at 526-535 shows a compositional bias: polar residues; the sequence is DLDSTGNSLN. The segment at 614 to 636 is polybasic cluster (PBR); the sequence is KHGFSWAVPKFMKRIKVPDYKDR. The region spanning 641-847 is the Rho-GAP domain; that stretch reads VPLTVNVQRS…HMIAECKKLF (207 aa). In terms of domain architecture, START spans 877–1084; it reads SNDQPADYRH…RDSFSNQSTE (208 aa).

As to quaternary structure, interacts with EF1A1, facilitates EF1A1 distribution to the membrane periphery and ruffles upon growth factor stimulation and suppresses cell migration. Interacts with tensin TNS1 (via N-terminus); the interaction is decreased by phosphorylation of TNS1. Interacts with TNS3 and PTEN; in resting cells, interacts with TNS3 (via C2 tensin-type domain) but, following growth factor stimulation, TNS3 and PTEN are phosphorylated which leads to weakened interaction with TNS3 and enhanced interaction with PTEN. Interacts (via C-terminus) with tensin TNS4 (via SH2 domain); the interaction is independent of tyrosine phosphorylation of DLC1.

It is found in the cytoplasm. The protein localises to the cell junction. It localises to the focal adhesion. The protein resides in the membrane. Its function is as follows. Functions as a GTPase-activating protein for the small GTPases RHOA, RHOB, RHOC and CDC42, terminating their downstream signaling. This induces morphological changes and detachment through cytoskeletal reorganization, playing a critical role in biological processes such as cell migration and proliferation. Also functions in vivo as an activator of the phospholipase PLCD1. Active DLC1 increases cell migration velocity but reduces directionality. Required for growth factor-induced epithelial cell migration; in resting cells, interacts with TNS3 while PTEN interacts with the p85 regulatory subunit of the PI3K kinase complex but growth factor stimulation induces phosphorylation of TNS3 and PTEN, causing them to change their binding preference so that PTEN interacts with DLC1 and TNS3 interacts with p85. The PTEN-DLC1 complex translocates to the posterior of migrating cells to activate RHOA while the TNS3-p85 complex translocates to the leading edge of migrating cells to promote RAC1 activation. This chain is Rho GTPase-activating protein 7 (Dlc1), found in Rattus norvegicus (Rat).